Here is a 223-residue protein sequence, read N- to C-terminus: uncharacterized protein (223 aa).

2 helical membrane-spanning segments follow: residues 1–21 and 45–65; these read MLII…TFYL and ILIG…TSLI.

It is found in the cell membrane. This is an uncharacterized protein from Haemophilus influenzae (strain ATCC 51907 / DSM 11121 / KW20 / Rd).